A 384-amino-acid chain; its full sequence is MGLLCSRNRRYNDADAEENAQTAEIERRIELETKAEKHIQKLLLLGAGESGKSTIFKQIKLLFQTGFDEAELKSYLPVIHANVYQTIKLLHDGSKEFAQNDVDSSKYVISNENKEIGEKLLEIGGRLDYPYLSKELAQEIENLWKDPAIQETYARGSELQIPDCTDYFMENLQRLSDANYVPTKEDVLYARVRTTGVVEIQFSPVGENKKSGEVYRLFDVGGQRNERRKWIHLFEGVSAVIFCAAISEYDQTLFEDENRNRMMETKELFEWILKQPCFEKTSFMLFLNKFDIFEKKILKVPLNVCEWFKDYQPVSTGKQEIEHAYEFVKKKFEESYFQSTAPDRVDRVFKIYRTTALDQKVVKKTFKLVDETLRRRNLLEAGLL.

Gly2 carries N-myristoyl glycine lipidation. Cys5 is lipidated: S-palmitoyl cysteine. Residues 38–384 (HIQKLLLLGA…RRNLLEAGLL (347 aa)) form the G-alpha domain. The segment at 41 to 54 (KLLLLGAGESGKST) is G1 motif. The GTP site is built by Glu49, Ser50, Gly51, Lys52, Ser53, Thr54, Asp163, Leu188, Tyr189, Thr194, Gly222, Asn288, Lys289, Asp291, and Ala356. Ser53 is a Mg(2+) binding site. Residues 186–194 (DVLYARVRT) are G2 motif. Thr194 lines the Mg(2+) pocket. The G3 motif stretch occupies residues 215 to 224 (YRLFDVGGQR). Positions 284-291 (MLFLNKFD) are G4 motif. The interval 354-359 (TTALDQ) is G5 motif.

It belongs to the G-alpha family. As to quaternary structure, g proteins are composed of 3 units; alpha, beta and gamma. The alpha chain contains the guanine nucleotide binding site. Requires Mg(2+) as cofactor.

Guanine nucleotide-binding proteins (G proteins) are involved as modulators or transducers in various transmembrane signaling systems. The sequence is that of Guanine nucleotide-binding protein alpha-2 subunit (GPA2) from Glycine max (Soybean).